A 428-amino-acid polypeptide reads, in one-letter code: 5'-deoxyadenosine deaminase (428 aa).

2 residues coordinate Zn(2+): His59 and His61. Residues Glu88 and His180 each coordinate substrate. Zn(2+) is bound at residue His207. Substrate contacts are provided by Glu210 and Asp296. Residue Asp296 participates in Zn(2+) binding.

It belongs to the metallo-dependent hydrolases superfamily. MTA/SAH deaminase family. In terms of assembly, homotetramer. Requires Zn(2+) as cofactor.

The enzyme catalyses 5'-deoxyadenosine + H2O + H(+) = 5'-deoxyinosine + NH4(+). It carries out the reaction S-adenosyl-L-homocysteine + H2O + H(+) = S-inosyl-L-homocysteine + NH4(+). It catalyses the reaction S-methyl-5'-thioadenosine + H2O + H(+) = S-methyl-5'-thioinosine + NH4(+). The catalysed reaction is adenosine + H2O + H(+) = inosine + NH4(+). It participates in amino-acid biosynthesis; S-adenosyl-L-methionine biosynthesis. Catalyzes the deamination of three SAM-derived enzymatic products, namely 5'-deoxyadenosine, S-adenosyl-L-homocysteine, and 5'-methylthioadenosine, to produce the inosine analogs. Can also deaminate adenosine. The preferred substrate for this enzyme is 5'-deoxyadenosine, but all these substrates are efficiently deaminated. Likely functions in a S-adenosyl-L-methionine (SAM) recycling pathway from S-adenosyl-L-homocysteine (SAH) produced from SAM-dependent methylation reactions. May also be involved in the recycling of 5'-deoxyadenosine, whereupon the 5'-deoxyribose moiety of 5'-deoxyinosine is further metabolized to deoxyhexoses used for the biosynthesis of aromatic amino acids in methanogens. The chain is 5'-deoxyadenosine deaminase from Methanococcus aeolicus (strain ATCC BAA-1280 / DSM 17508 / OCM 812 / Nankai-3).